Consider the following 149-residue polypeptide: Deoxyuridine 5'-triphosphate nucleotidohydrolase (149 aa).

Substrate-binding positions include 68–70 (RSG), N81, and 85–87 (LID).

It belongs to the dUTPase family. It depends on Mg(2+) as a cofactor.

The enzyme catalyses dUTP + H2O = dUMP + diphosphate + H(+). It participates in pyrimidine metabolism; dUMP biosynthesis; dUMP from dCTP (dUTP route): step 2/2. Its function is as follows. This enzyme is involved in nucleotide metabolism: it produces dUMP, the immediate precursor of thymidine nucleotides and it decreases the intracellular concentration of dUTP so that uracil cannot be incorporated into DNA. The polypeptide is Deoxyuridine 5'-triphosphate nucleotidohydrolase (Azoarcus sp. (strain BH72)).